We begin with the raw amino-acid sequence, 526 residues long: Efflux pump aunC (526 aa).

14 helical membrane-spanning segments follow: residues 23-43, 64-84, 89-109, 125-145, 155-175, 183-203, 218-238, 254-274, 296-316, 339-359, 360-380, 386-406, 418-438, and 491-511; these read LCYK…CTSL, DVGW…LPFG, FFPI…GSFI, VAGL…TQCV, GFIM…GGAF, WCFY…FFTF, AAGL…CLLL, IIAL…LQLW, LYGF…PIWF, VIFA…GPFM, LLSA…HPSS, IGYQ…PVFV, TATA…VSVA, and VHTF…ATVI.

This sequence belongs to the major facilitator superfamily. TCR/Tet family.

It localises to the cell membrane. Efflux pump; part of the gene cluster that mediates the biosynthesis of aurasperone B, a dimeric gamma-naphthopyrone. This chain is Efflux pump aunC, found in Aspergillus niger (strain ATCC 1015 / CBS 113.46 / FGSC A1144 / LSHB Ac4 / NCTC 3858a / NRRL 328 / USDA 3528.7).